Consider the following 41-residue polypeptide: Augerpeptide hhe6.1 (41 aa).

Cystine bridges form between C11-C32, C18-C35, and C31-C40.

In terms of tissue distribution, expressed by the venom duct.

Its subcellular location is the secreted. In Hastula hectica (Sea snail), this protein is Augerpeptide hhe6.1.